The chain runs to 164 residues: UPF0303 protein R02983 (164 aa).

The protein belongs to the UPF0303 family.

This chain is UPF0303 protein R02983, found in Rhizobium meliloti (strain 1021) (Ensifer meliloti).